The following is a 348-amino-acid chain: Dihydroorotase (348 aa).

Histidine 17 and histidine 19 together coordinate Zn(2+). Substrate-binding positions include 19–21 (HLR) and asparagine 45. Zn(2+) contacts are provided by lysine 103, histidine 140, and histidine 178. Lysine 103 carries the N6-carboxylysine modification. Histidine 140 is a substrate binding site. Position 223 (leucine 223) interacts with substrate. Residue aspartate 251 participates in Zn(2+) binding. Residue aspartate 251 is part of the active site. Histidine 255 and alanine 267 together coordinate substrate.

It belongs to the metallo-dependent hydrolases superfamily. DHOase family. Class II DHOase subfamily. As to quaternary structure, homodimer. Zn(2+) serves as cofactor.

The enzyme catalyses (S)-dihydroorotate + H2O = N-carbamoyl-L-aspartate + H(+). It functions in the pathway pyrimidine metabolism; UMP biosynthesis via de novo pathway; (S)-dihydroorotate from bicarbonate: step 3/3. In terms of biological role, catalyzes the reversible cyclization of carbamoyl aspartate to dihydroorotate. The polypeptide is Dihydroorotase (Salmonella typhi).